The primary structure comprises 277 residues: Sulfur carrier protein FdhD (277 aa).

The Cysteine persulfide intermediate role is filled by Cys121. A Mo-bis(molybdopterin guanine dinucleotide)-binding site is contributed by 260–265; the sequence is FCKPGR.

This sequence belongs to the FdhD family.

The protein localises to the cytoplasm. Functionally, required for formate dehydrogenase (FDH) activity. Acts as a sulfur carrier protein that transfers sulfur from IscS to the molybdenum cofactor prior to its insertion into FDH. This Shigella flexneri serotype 5b (strain 8401) protein is Sulfur carrier protein FdhD.